The primary structure comprises 32 residues: Phallacidin proprotein (32 aa).

A propeptide spanning residues 1–10 is cleaved from the precursor; sequence MSDINATRLP. Positions 11 to 17 form a cross-link, cyclopeptide (Ala-Pro); the sequence is AWLVDCP. Positions 12 to 16 form a cross-link, 2'-cysteinyl-6'-hydroxytryptophan sulfoxide (Trp-Cys); that stretch reads WLVDC. Residues 18–32 constitute a propeptide that is removed on maturation; that stretch reads CVGDDINRLLTRGEK.

This sequence belongs to the MSDIN fungal toxin family. Processed by the macrocyclase-peptidase enzyme POPB to yield a toxic cyclic heptapeptide. POPB first removes 10 residues from the N-terminus. Conformational trapping of the remaining peptide forces the enzyme to release this intermediate rather than proceed to macrocyclization. The enzyme rebinds the remaining peptide in a different conformation and catalyzes macrocyclization of the N-terminal 7 residues.

Major toxin that belongs to the bicyclic heptapeptides called phallotoxins. Although structurally related to amatoxins, phallotoxins have a different mode of action, which is the stabilization of F-actin. Phallotoxins are poisonous when administered parenterally, but not orally because of poor absorption. This chain is Phallacidin proprotein, found in Amanita pallidorosea.